Reading from the N-terminus, the 94-residue chain is Large ribosomal subunit protein uL23 (94 aa).

This sequence belongs to the universal ribosomal protein uL23 family. As to quaternary structure, part of the 50S ribosomal subunit. Contacts protein L29, and trigger factor when it is bound to the ribosome.

Its function is as follows. One of the early assembly proteins it binds 23S rRNA. One of the proteins that surrounds the polypeptide exit tunnel on the outside of the ribosome. Forms the main docking site for trigger factor binding to the ribosome. The protein is Large ribosomal subunit protein uL23 of Ligilactobacillus salivarius (strain UCC118) (Lactobacillus salivarius).